We begin with the raw amino-acid sequence, 932 residues long: Protein translocase subunit SecA (932 aa).

ATP-binding positions include Q83, 101 to 105, and D491; that span reads GEGKT.

It belongs to the SecA family. In terms of assembly, monomer and homodimer. Part of the essential Sec protein translocation apparatus which comprises SecA, SecYEG and auxiliary proteins SecDF. Other proteins may also be involved.

The protein resides in the cell inner membrane. It localises to the cellular thylakoid membrane. Its subcellular location is the cytoplasm. It carries out the reaction ATP + H2O + cellular proteinSide 1 = ADP + phosphate + cellular proteinSide 2.. Part of the Sec protein translocase complex. Interacts with the SecYEG preprotein conducting channel. Has a central role in coupling the hydrolysis of ATP to the transfer of proteins into and across the cell membrane, serving as an ATP-driven molecular motor driving the stepwise translocation of polypeptide chains across the membrane. Functionally, probably participates in protein translocation into and across both the cytoplasmic and thylakoid membranes in cyanobacterial cells. The chain is Protein translocase subunit SecA from Cyanothece sp. (strain PCC 7425 / ATCC 29141).